Reading from the N-terminus, the 116-residue chain is uncharacterized protein (116 aa).

This is an uncharacterized protein from Schizosaccharomyces pombe (strain 972 / ATCC 24843) (Fission yeast).